A 439-amino-acid polypeptide reads, in one-letter code: Forkhead box protein J1-B (439 aa).

Residues 124–218 constitute a DNA-binding region (fork-head); that stretch reads KPPYSYATLI…MNGAMKKRRL (95 aa).

It belongs to the FOXJ1 family.

Its subcellular location is the nucleus. Key transcription factor required for motile ciliogenesis. Activates genes essential for motile cilia formation and function. The polypeptide is Forkhead box protein J1-B (foxj1-b) (Xenopus laevis (African clawed frog)).